The primary structure comprises 344 residues: Anthranilate phosphoribosyltransferase (344 aa).

Residues Gly84, 87 to 88, Ser92, 94 to 97, 112 to 120, and Ser124 contribute to the 5-phospho-alpha-D-ribose 1-diphosphate site; these read GD, NIST, and KHGNRSASG. Gly84 contributes to the anthranilate binding site. Ser96 is a binding site for Mg(2+). Asn115 contacts anthranilate. An anthranilate-binding site is contributed by Arg170. Mg(2+)-binding residues include Asp229 and Glu230.

It belongs to the anthranilate phosphoribosyltransferase family. Homodimer. Mg(2+) is required as a cofactor.

The catalysed reaction is N-(5-phospho-beta-D-ribosyl)anthranilate + diphosphate = 5-phospho-alpha-D-ribose 1-diphosphate + anthranilate. It functions in the pathway amino-acid biosynthesis; L-tryptophan biosynthesis; L-tryptophan from chorismate: step 2/5. Its function is as follows. Catalyzes the transfer of the phosphoribosyl group of 5-phosphorylribose-1-pyrophosphate (PRPP) to anthranilate to yield N-(5'-phosphoribosyl)-anthranilate (PRA). In Synechococcus sp. (strain RCC307), this protein is Anthranilate phosphoribosyltransferase.